Consider the following 118-residue polypeptide: MLRISSSSSMALKFSQILFIVLWLSLFFLLLHHLYSLNFRRLYSLNAVEPSLLKQHYRSYRLVSRKVLSDRFDFTPFHSRDNSRHNHRSGEQYDGDEIDPRYGVEKRRVPSGPNPLHH.

The N-terminal stretch at M1–Y35 is a signal peptide. Composition is skewed to basic and acidic residues over residues T75–E91 and I98–R108. Residues T75 to H118 are disordered. 2 positions are modified to hydroxyproline: P110 and P113. O-linked (Ara...) hydroxyproline glycosylation occurs at P113.

This sequence belongs to the CLV3/ESR signal peptide family. Post-translationally, the O-glycosylation (arabinosylation) of the hydroxyproline Pro-113 enhances binding affinity of the CLE12p peptide for its receptor. Mostly expressed in seedlings, roots, flowers, stems and apex, and, to a lower extent, in leaves and siliques.

It localises to the secreted. The protein resides in the extracellular space. Its function is as follows. Extracellular signal peptide that regulates cell fate. Represses root apical meristem maintenance. This Arabidopsis thaliana (Mouse-ear cress) protein is CLAVATA3/ESR (CLE)-related protein 12.